The chain runs to 1288 residues: 5-oxoprolinase (1288 aa).

A Phosphothreonine modification is found at Thr-151. A disordered region spans residues 1249–1269; the sequence is GGGGYGDPEDPAPLPGSPLQP. Ser-1265 carries the post-translational modification Phosphoserine.

Belongs to the oxoprolinase family. In terms of assembly, homodimer. As to expression, expressed in coronary artery and kidney.

The protein localises to the cytoplasm. It is found in the cytosol. It catalyses the reaction 5-oxo-L-proline + ATP + 2 H2O = L-glutamate + ADP + phosphate + H(+). Catalyzes the cleavage of 5-oxo-L-proline to form L-glutamate coupled to the hydrolysis of ATP to ADP and inorganic phosphate. The sequence is that of 5-oxoprolinase (OPLAH) from Bos taurus (Bovine).